We begin with the raw amino-acid sequence, 361 residues long: Divinyl chlorophyll a/b light-harvesting protein PcbD (361 aa).

Transmembrane regions (helical) follow at residues 27-47 (FIAS…GSTL), 93-113 (IVHL…GILF), 140-160 (FILG…VEWA), 201-221 (VMGG…FHIV), 248-268 (AVLS…AFWC), and 315-335 (LTNV…WHAL).

It belongs to the PsbB/PsbC family. IsiA/Pcb subfamily. In terms of assembly, the antenna complex consists of divinyl chlorophylls (a and b) and divinyl chlorophyll a/b binding proteins and binds more divinyl chlorophyll b than does the antenna complex from high-light-adapted Prochlorococcus. Divinyl chlorophyll a is required as a cofactor. The cofactor is divinyl chlorophyll b.

Its subcellular location is the cellular thylakoid membrane. The antenna complex functions as a light receptor, it captures and delivers excitation energy to photosystems II and I. The Prochlorales pcb genes are not related to higher plant LHCs. This Prochlorococcus marinus (strain SARG / CCMP1375 / SS120) protein is Divinyl chlorophyll a/b light-harvesting protein PcbD (pcbD).